The primary structure comprises 415 residues: MNSNSIQSFDALPHNLRECFLDMASFLEDQRIIASTIIDLWSASYGKEGMNNLQDLASRNLLKLLPIGRNEYEDGFYNELLVKQDNVLREFAINQCLKESSSIFERKRLNLEIQDNKFPNWCLNPKQPIVINASLFSISTDDSFASSWFEMDCPNVEALVLNISSSNYALPNFIATMKELKVVIIINHGLEPAKLTNLSCLSSLPNLKRIRFEKVSISLLDIPKLGLKSLEKLSLWFCHVVDALNELEDVSETLQSLQEIEIDYCYNLDELPYWISQVVSLKKLSVTNCNKLCRVIEAIGDLRDLETLRLSSCASLLELPETIDRLDNLRFLDVSGGFQLKNLPLEIGKLKKLEKISMKDCYRCELPDSVKNLENLEVKCDEDTAFLWKILKPEMKNLTITEEKTEHNLNLLQLF.

An NB-ARC domain is found at 8-43 (SFDALPHNLRECFLDMASFLEDQRIIASTIIDLWSA). LRR repeat units lie at residues 229 to 251 (SLEKLSLWFCHVVDALNELEDVS), 256 to 278 (SLQEIEIDYCYNLDELPYWISQV), 280 to 303 (SLKKLSVTNCNKLCRVIEAIGDLR), 304 to 326 (DLETLRLSSCASLLELPETIDRL), 328 to 351 (NLRFLDVSGGFQLKNLPLEIGKLK), and 352 to 373 (KLEKISMKDCYRCELPDSVKNL). Residues 239–260 (HVVDALNELEDVSETLQSLQEI) are a coiled coil.

This sequence belongs to the disease resistance NB-LRR family.

In terms of biological role, possible disease resistance protein. This is Probable disease resistance protein At5g66890 from Arabidopsis thaliana (Mouse-ear cress).